The sequence spans 133 residues: Ribonuclease VapC1 (133 aa).

Residues D7 and D98 each contribute to the Mg(2+) site.

Belongs to the PINc/VapC protein family. It depends on Mg(2+) as a cofactor.

Its function is as follows. Toxic component of a type II toxin-antitoxin (TA) system. The cognate antitoxin is VapB1. The chain is Ribonuclease VapC1 from Mycobacterium tuberculosis (strain CDC 1551 / Oshkosh).